Here is a 198-residue protein sequence, read N- to C-terminus: Peptidyl-tRNA hydrolase (198 aa).

TRNA is bound at residue tyrosine 17. Histidine 22 serves as the catalytic Proton acceptor. TRNA is bound by residues tyrosine 74, asparagine 76, and asparagine 122.

It belongs to the PTH family. Monomer.

The protein resides in the cytoplasm. It carries out the reaction an N-acyl-L-alpha-aminoacyl-tRNA + H2O = an N-acyl-L-amino acid + a tRNA + H(+). Its function is as follows. Hydrolyzes ribosome-free peptidyl-tRNAs (with 1 or more amino acids incorporated), which drop off the ribosome during protein synthesis, or as a result of ribosome stalling. In terms of biological role, catalyzes the release of premature peptidyl moieties from peptidyl-tRNA molecules trapped in stalled 50S ribosomal subunits, and thus maintains levels of free tRNAs and 50S ribosomes. This chain is Peptidyl-tRNA hydrolase, found in Kineococcus radiotolerans (strain ATCC BAA-149 / DSM 14245 / SRS30216).